Here is a 439-residue protein sequence, read N- to C-terminus: Adenylosuccinate synthetase (439 aa).

GTP contacts are provided by residues 13–19 (GDEGKGK) and 41–43 (GHT). The Proton acceptor role is filled by D14. The Mg(2+) site is built by D14 and G41. IMP-binding positions include 14-17 (DEGK), 39-42 (NAGH), T130, R144, Q226, T241, and R313. H42 acts as the Proton donor in catalysis. Residue 309-315 (ASTGRQR) coordinates substrate. GTP-binding positions include R315, 341–343 (KLD), and 422–424 (STG).

This sequence belongs to the adenylosuccinate synthetase family. In terms of assembly, homodimer. Mg(2+) is required as a cofactor.

The protein resides in the cytoplasm. It catalyses the reaction IMP + L-aspartate + GTP = N(6)-(1,2-dicarboxyethyl)-AMP + GDP + phosphate + 2 H(+). It participates in purine metabolism; AMP biosynthesis via de novo pathway; AMP from IMP: step 1/2. Its function is as follows. Plays an important role in the de novo pathway of purine nucleotide biosynthesis. Catalyzes the first committed step in the biosynthesis of AMP from IMP. The protein is Adenylosuccinate synthetase of Acinetobacter baylyi (strain ATCC 33305 / BD413 / ADP1).